The chain runs to 21 residues: Peptide PGLa-R2 (21 aa).

L21 carries the post-translational modification Leucine amide.

As to expression, expressed by the skin glands.

Its subcellular location is the secreted. Antimicrobial peptide. The protein is Peptide PGLa-R2 of Xenopus ruwenzoriensis (Uganda clawed frog).